Reading from the N-terminus, the 519-residue chain is Putative thymidine phosphorylase (519 aa).

This sequence belongs to the thymidine/pyrimidine-nucleoside phosphorylase family. Type 2 subfamily.

It carries out the reaction thymidine + phosphate = 2-deoxy-alpha-D-ribose 1-phosphate + thymine. The protein is Putative thymidine phosphorylase of Maricaulis maris (strain MCS10) (Caulobacter maris).